We begin with the raw amino-acid sequence, 376 residues long: DNA replication and repair protein RecF (376 aa).

30–37 (GNNAQGKS) contributes to the ATP binding site.

This sequence belongs to the RecF family.

The protein localises to the cytoplasm. In terms of biological role, the RecF protein is involved in DNA metabolism; it is required for DNA replication and normal SOS inducibility. RecF binds preferentially to single-stranded, linear DNA. It also seems to bind ATP. The polypeptide is DNA replication and repair protein RecF (Nostoc sp. (strain PCC 7120 / SAG 25.82 / UTEX 2576)).